A 21-amino-acid polypeptide reads, in one-letter code: Bradykinin-potentiating peptide K12 (21 aa).

The segment at 1-21 (LRDYANRVINGGPVEAAGPPA) is disordered.

Expressed by the venom gland.

The protein localises to the secreted. In terms of biological role, inhibits angiotensin-converting enzyme (ACE), but does not serve as substrate for the enzyme. Potentiate bradykinin (BK) on the isolated guinea pig ileum as well as the isolated rat uterus for contraction. Also potentiates in vivo the depressor effect of BK on arterial blood pressure in the normotensive anesthetized rat. Intracerebroventricular injection into mice does not show toxic activity. In Buthus occitanus (Common European scorpion), this protein is Bradykinin-potentiating peptide K12.